Here is a 949-residue protein sequence, read N- to C-terminus: Isoleucine--tRNA ligase (949 aa).

The 'HIGH' region motif lies at 58–68 (PYANGDIHIGH). E567 is an L-isoleucyl-5'-AMP binding site. The 'KMSKS' region signature appears at 608-612 (KMSKS). K611 contacts ATP. Residues C912, C915, C932, and C935 each coordinate Zn(2+).

The protein belongs to the class-I aminoacyl-tRNA synthetase family. IleS type 1 subfamily. In terms of assembly, monomer. It depends on Zn(2+) as a cofactor.

It is found in the cytoplasm. It catalyses the reaction tRNA(Ile) + L-isoleucine + ATP = L-isoleucyl-tRNA(Ile) + AMP + diphosphate. Its function is as follows. Catalyzes the attachment of isoleucine to tRNA(Ile). As IleRS can inadvertently accommodate and process structurally similar amino acids such as valine, to avoid such errors it has two additional distinct tRNA(Ile)-dependent editing activities. One activity is designated as 'pretransfer' editing and involves the hydrolysis of activated Val-AMP. The other activity is designated 'posttransfer' editing and involves deacylation of mischarged Val-tRNA(Ile). This Vibrio cholerae serotype O1 (strain ATCC 39315 / El Tor Inaba N16961) protein is Isoleucine--tRNA ligase.